The sequence spans 308 residues: uncharacterized protein (308 aa).

A compositionally biased stretch (polar residues) spans 43 to 55; the sequence is SQYGTWADQHQNG. The tract at residues 43–289 is disordered; sequence SQYGTWADQH…KEERSEECSP (247 aa). Ser-62 is subject to Phosphoserine. The segment covering 80-90 has biased composition (polar residues); it reads HLSSYTESTSV. Over residues 91–109 the composition is skewed to basic and acidic residues; the sequence is EQRDSSRDRRSSSVDRSSS. The segment covering 136–152 has biased composition (polar residues); sequence IHQTSVLDSSALKTRVQ. A compositionally biased stretch (basic residues) spans 153–168; it reads LSKRSRRRAPISHSLR. A Phosphoserine modification is found at Ser-166. Composition is skewed to basic and acidic residues over residues 175–186 and 193–216; these read SESRSPLEEESH and DSTEEKSPRRDESDEEPPRVERTP. Phosphoserine is present on residues Ser-205, Ser-259, Ser-262, and Ser-288.

This is an uncharacterized protein from Mus musculus (Mouse).